Here is a 181-residue protein sequence, read N- to C-terminus: CDP-archaeol synthase (181 aa).

A run of 5 helical transmembrane segments spans residues 7-27 (VVVA…AVLA), 55-75 (AVGT…RPAA), 80-100 (GVVL…GAMV), 128-148 (FVVV…GDTF), and 150-170 (LPVL…TNGI).

Belongs to the CDP-archaeol synthase family. It depends on Mg(2+) as a cofactor.

It localises to the cell membrane. It catalyses the reaction 2,3-bis-O-(geranylgeranyl)-sn-glycerol 1-phosphate + CTP + H(+) = CDP-2,3-bis-O-(geranylgeranyl)-sn-glycerol + diphosphate. The protein operates within membrane lipid metabolism; glycerophospholipid metabolism. In terms of biological role, catalyzes the formation of CDP-2,3-bis-(O-geranylgeranyl)-sn-glycerol (CDP-archaeol) from 2,3-bis-(O-geranylgeranyl)-sn-glycerol 1-phosphate (DGGGP) and CTP. This reaction is the third ether-bond-formation step in the biosynthesis of archaeal membrane lipids. The polypeptide is CDP-archaeol synthase (Halobacterium salinarum (strain ATCC 29341 / DSM 671 / R1)).